A 72-amino-acid chain; its full sequence is Translation initiation factor IF-1 (72 aa).

The S1-like domain occupies 1–72 (MAKEDVIEIE…TRGRITYRFK (72 aa)).

Belongs to the IF-1 family. As to quaternary structure, component of the 30S ribosomal translation pre-initiation complex which assembles on the 30S ribosome in the order IF-2 and IF-3, IF-1 and N-formylmethionyl-tRNA(fMet); mRNA recruitment can occur at any time during PIC assembly.

It localises to the cytoplasm. Its function is as follows. One of the essential components for the initiation of protein synthesis. Stabilizes the binding of IF-2 and IF-3 on the 30S subunit to which N-formylmethionyl-tRNA(fMet) subsequently binds. Helps modulate mRNA selection, yielding the 30S pre-initiation complex (PIC). Upon addition of the 50S ribosomal subunit IF-1, IF-2 and IF-3 are released leaving the mature 70S translation initiation complex. In Streptococcus suis (strain 05ZYH33), this protein is Translation initiation factor IF-1.